The following is a 1257-amino-acid chain: Protein flightless-1 homolog (1257 aa).

16 LRR repeats span residues 6–31, 32–54, 56–77, 78–102, 103–126, 128–148, 149–172, 174–195, 197–221, 222–244, 246–267, 268–290, 292–315, 316–338, 339–361, and 363–384; these read LQFV…VEQM, TQMT…LSRC, NLEH…LSDL, PRLR…IFRM, KDLT…EYAK, SIVL…VCAN, LIDL…IRRL, MLQS…QLPS, TSLS…LDDM, HNLR…LFKL, NLRK…EGEW, ENLE…VVKL, RLTK…IGKL, IQLT…ISRC, VKLQ…IHLL, and DLKV…PNDA. Gelsolin-like repeat units follow at residues 523-600, 640-714, 759-832, and 1168-1243; these read MDEA…EEFL, AVEM…PEFW, ELPK…MMFR, and EKTV…CRFR.

Belongs to the villin/gelsolin family.

Its function is as follows. May play a key role in embryonic cellularization by interacting with both the cytoskeleton and other cellular components. This is Protein flightless-1 homolog (fli-1) from Caenorhabditis elegans.